The primary structure comprises 227 residues: Max dimerization protein 1 (227 aa).

The Nuclear localization signal motif lies at R21 to K48. 3 disordered regions span residues Y30–N66, M142–L161, and G184–L227. Residues S55–L107 form the bHLH domain. Residues M198 to T211 are compositionally biased toward polar residues. The span at K216 to L227 shows a compositional bias: basic and acidic residues.

In terms of assembly, heterodimer with MAX; the interaction is required for DNA-binding. DNA binding requires dimerization with another bHLH protein; does not form homodimers, and does not bind to DNA in the absence of MAX in vitro. Interacts with RNF17. Post-translationally, ubiquitinated by BIRC2/c-IAP1, leading to its subsequent degradation by the proteasome.

It is found in the nucleus. Functionally, component of a transcriptional repressor complex together with MAX. In complex with MAX binds to the core DNA sequence 5'-CAC[GA]TG-3'. Antagonizes MYC transcriptional activity by competing with MYC for MAX binding. Binds to the TERT promoter and represses telomerase expression, possibly by interfering with MYC binding. The chain is Max dimerization protein 1 (Mxd1) from Mus musculus (Mouse).